Consider the following 113-residue polypeptide: Protein FAM27E3 (113 aa).

The interval 1–113 is disordered; that stretch reads MGIFQLLRDR…YTHRHTHRVL (113 aa). The span at 77 to 99 shows a compositional bias: basic and acidic residues; sequence QTDRERERNTQRLRDRERRENGR. Positions 100–113 are enriched in basic residues; it reads HTHTYTHRHTHRVL.

Belongs to the FAM27 family.

In Homo sapiens (Human), this protein is Protein FAM27E3 (FAM27E3).